Here is a 449-residue protein sequence, read N- to C-terminus: Deoxyguanosinetriphosphate triphosphohydrolase-like protein (449 aa).

The interval 1–27 (MTSSVWQERRHGEDKQRRNDHRSPYQR) is disordered. Residues 7 to 27 (QERRHGEDKQRRNDHRSPYQR) show a composition bias toward basic and acidic residues. One can recognise an HD domain in the interval 59-255 (RLTHSLEVSQ…MELADDIAYA (197 aa)).

It belongs to the dGTPase family. Type 2 subfamily.

In Shewanella baltica (strain OS185), this protein is Deoxyguanosinetriphosphate triphosphohydrolase-like protein.